We begin with the raw amino-acid sequence, 160 residues long: Aspartate 1-decarboxylase 2 (160 aa).

Residue Ser25 is the Schiff-base intermediate with substrate; via pyruvic acid of the active site. Ser25 is subject to Pyruvic acid (Ser). Position 57 (Thr57) interacts with substrate. Tyr58 functions as the Proton donor in the catalytic mechanism. 73 to 75 (GAA) serves as a coordination point for substrate.

It belongs to the PanD family. In terms of assembly, heterooctamer of four alpha and four beta subunits. The cofactor is pyruvate. Post-translationally, is synthesized initially as an inactive proenzyme, which is activated by self-cleavage at a specific serine bond to produce a beta-subunit with a hydroxyl group at its C-terminus and an alpha-subunit with a pyruvoyl group at its N-terminus.

Its subcellular location is the cytoplasm. The catalysed reaction is L-aspartate + H(+) = beta-alanine + CO2. Its pathway is cofactor biosynthesis; (R)-pantothenate biosynthesis; beta-alanine from L-aspartate: step 1/1. Functionally, catalyzes the pyruvoyl-dependent decarboxylation of aspartate to produce beta-alanine. In Frankia casuarinae (strain DSM 45818 / CECT 9043 / HFP020203 / CcI3), this protein is Aspartate 1-decarboxylase 2.